The chain runs to 302 residues: Phosphoribosylaminoimidazole-succinocarboxamide synthase (302 aa).

The protein belongs to the SAICAR synthetase family.

The catalysed reaction is 5-amino-1-(5-phospho-D-ribosyl)imidazole-4-carboxylate + L-aspartate + ATP = (2S)-2-[5-amino-1-(5-phospho-beta-D-ribosyl)imidazole-4-carboxamido]succinate + ADP + phosphate + 2 H(+). The protein operates within purine metabolism; IMP biosynthesis via de novo pathway; 5-amino-1-(5-phospho-D-ribosyl)imidazole-4-carboxamide from 5-amino-1-(5-phospho-D-ribosyl)imidazole-4-carboxylate: step 1/2. The polypeptide is Phosphoribosylaminoimidazole-succinocarboxamide synthase (Polaromonas sp. (strain JS666 / ATCC BAA-500)).